Consider the following 443-residue polypeptide: MSHMTPQEIVHELDKHIIGQEAAKRSVAIALRNRWRRQQVGEPLRHEITPKNILMIGPTGVGKTEIARRLARLADAPFIKIEATKFTEVGYVGRDVDSIIRDLVESAIKQAREHEIRKNKPLAEDRAEERILDALLPSARDSGFDANPSEENNATRQKFRKKLREGELDDKEIDIEITMSQASMEIFAPPGMEELTSQIQGMFQNMGASKKKSRKLRIREARKLLTEEEAARLINDEELKLNAVQNVEQNGIVFLDEIDKITSRSEVSSSDISRQGVQRDLLPLVEGTTISTKYGMIRTDHILFIASGAFHLAKPSDLIPELQGRFPIRVELDSLSADDFKQILTNTDACLIRQYQALLKTEGIELNFSEDAIERLAEIAFSVNEITENIGARRLHTVMEKLLEDISFNATRYSGSTHVIDAAYVDERLGKLSQSEDLARYVL.

ATP contacts are provided by residues I18 and 60 to 65 (GVGKTE). Residues 139–161 (ARDSGFDANPSEENNATRQKFRK) are disordered. Positions 256, 321, and 393 each coordinate ATP.

It belongs to the ClpX chaperone family. HslU subfamily. A double ring-shaped homohexamer of HslV is capped on each side by a ring-shaped HslU homohexamer. The assembly of the HslU/HslV complex is dependent on binding of ATP.

Its subcellular location is the cytoplasm. ATPase subunit of a proteasome-like degradation complex; this subunit has chaperone activity. The binding of ATP and its subsequent hydrolysis by HslU are essential for unfolding of protein substrates subsequently hydrolyzed by HslV. HslU recognizes the N-terminal part of its protein substrates and unfolds these before they are guided to HslV for hydrolysis. The sequence is that of ATP-dependent protease ATPase subunit HslU from Nitrosomonas eutropha (strain DSM 101675 / C91 / Nm57).